A 180-amino-acid polypeptide reads, in one-letter code: Shikimate kinase (180 aa).

14-19 (GAGKSC) contributes to the ATP binding site. Mg(2+) is bound at residue S18. The substrate site is built by D36, R60, and G82. ATP is bound at residue R120. Residue R139 participates in substrate binding.

Belongs to the shikimate kinase family. As to quaternary structure, monomer. Requires Mg(2+) as cofactor.

The protein localises to the cytoplasm. It carries out the reaction shikimate + ATP = 3-phosphoshikimate + ADP + H(+). The protein operates within metabolic intermediate biosynthesis; chorismate biosynthesis; chorismate from D-erythrose 4-phosphate and phosphoenolpyruvate: step 5/7. Functionally, catalyzes the specific phosphorylation of the 3-hydroxyl group of shikimic acid using ATP as a cosubstrate. This Xanthomonas euvesicatoria pv. vesicatoria (strain 85-10) (Xanthomonas campestris pv. vesicatoria) protein is Shikimate kinase.